The following is a 31-amino-acid chain: VLLLSQDYGKYKEVAELTRTQILAASYELHK.

3 Spectrin repeats span residues 1-10 (VLLLSQDYGK), 11-19 (YKEVAELTR), and 20-31 (TQILAASYELHK). A Phosphotyrosine modification is found at Tyr-27.

Belongs to the spectrin family. In terms of assembly, interacts with ANK2. Interacts with CPNE4 (via VWFA domain). Like erythrocyte spectrin, the spectrin-like proteins are capable to form dimers which can further associate to tetramers. Associates with the gamma-tubulin complex in brain, but not in kidney, liver, sperm, or uterus. Interacts with CAMSAP1. Can form heterodimers with SPTAN1.

It localises to the cytoplasm. The protein resides in the cytoskeleton. Its subcellular location is the myofibril. It is found in the sarcomere. The protein localises to the m line. It localises to the cytosol. The protein resides in the cell membrane. Functionally, fodrin, which seems to be involved in secretion, interacts with calmodulin in a calcium-dependent manner and is thus candidate for the calcium-dependent movement of the cytoskeleton at the membrane. Plays a critical role in central nervous system development and function. This Capra hircus (Goat) protein is Spectrin beta chain, non-erythrocytic 1 (SPTBN1).